A 766-amino-acid polypeptide reads, in one-letter code: Leucine-rich repeat and fibronectin type III domain-containing protein 1 (766 aa).

An N-terminal signal peptide occupies residues 1-31 (MAPGPFSSGLLSPPPAALPFLLLLWAGASRG). The LRRNT domain maps to 32 to 65 (QPCPGRCICQNVAPTLTMLCAKTGLLFVPPAIDR). Over 32–536 (QPCPGRCICQ…LRAHFLGGTM (505 aa)) the chain is Extracellular. LRR repeat units lie at residues 66-87 (RVVELRLTDNFIAAVRRRDFAN), 90-111 (SLVHLTLSRNTIGQVAAGAFAD), 114-135 (ALRALHLDSNRLAEVRGDQLRG), 138-159 (NLRHLILGNNQIRKVESAAFDA), 163-184 (TVEDLDLSYNNLEALPWEAVGQ), 187-208 (NLNTLTLDHNLIDHIAEGTFVQ), and 211-232 (KLVRLDMTSNRLHKLPPDGLFL). N-linked (GlcNAc...) asparagine glycosylation occurs at asparagine 87. The 47-residue stretch at 252–298 (NPLHCNCELLWLRRLTREDDLETCATPEHLTDRYFWSIPEEEFLCEP) folds into the LRRCT domain. Positions 299–386 (PLITRQAGGR…GEATAPVEVC (88 aa)) constitute an Ig-like domain. A disulfide bridge connects residues cysteine 321 and cysteine 370. N-linked (GlcNAc...) asparagine glycosylation is present at asparagine 343. The segment at 397 to 422 (PAAPPPLTEPGSSDIATPGRPGANDS) is disordered. A Fibronectin type-III domain is found at 424–520 (TERRLVAAEL…GCVQFTTAGD (97 aa)). Residues 537–557 (IIAIGGVIVASVLVFIVLLMI) form a helical membrane-spanning segment. The Cytoplasmic portion of the chain corresponds to 558–766 (RYKVYGDGDS…STEWMLESTV (209 aa)). 2 disordered regions span residues 568–601 (RRIKGTSRSPPRVSHVCSQTNGSSAQQASAPPAP) and 646–742 (CLLP…GEDG). Residue serine 713 is modified to Phosphoserine. Residues 714-727 (YPRRARRTKRHRST) show a composition bias toward basic residues.

The protein belongs to the LRFN family. In terms of assembly, forms heteromeric complexes with LRFN2, LRFN4 and LRFN5; binding to LRFN2 and LRFN5 may be weaker than that to LRFN4. Also interacts with LRFN3. Forms homomeric complexes, but not across cell junctions. Interacts with DLG1, DLG2 and DLG4, but not with MAGI2, not CASK. Interacts with DLG3. Interacts with 2 AMPA receptor subunits GRIA1 and GRIA2 and NMDA receptor subunit GRIN1. Glycosylated. As to expression, mainly expressed in brain (at protein level) and testis. In brain, found in cerebral cortex (including pyramidal neurons), hippocampus (including CA3 and CA1 neurons), dentate gyrus, cerebellum (including Purkinje neurons) (at protein level) (at protein level). Also expressed in the olfactory bulb.

The protein localises to the membrane. Its subcellular location is the synapse. It is found in the postsynaptic density membrane. Its function is as follows. Promotes neurite outgrowth in hippocampal neurons. Involved in the regulation of the differentiation and maintenance of excitatory synapses. Induces the clustering of excitatory postsynaptic proteins, including DLG4, DLGAP1, GRIA1 and GRIN1. The chain is Leucine-rich repeat and fibronectin type III domain-containing protein 1 (Lrfn1) from Rattus norvegicus (Rat).